A 269-amino-acid polypeptide reads, in one-letter code: Alcohol dehydrogenase-related 31 kDa protein (269 aa).

11 to 34 (YVADCGGIALETCKVLMTKNIAKL) is a binding site for NAD(+). Ser-139 serves as a coordination point for substrate. Tyr-152 acts as the Proton acceptor in catalysis.

It belongs to the short-chain dehydrogenases/reductases (SDR) family.

The protein is Alcohol dehydrogenase-related 31 kDa protein (Adhr) of Drosophila lebanonensis (Fruit fly).